The following is a 146-amino-acid chain: Peptide methionine sulfoxide reductase MsrB (146 aa).

In terms of domain architecture, MsrB spans 6–129 (SAEAIAKLSA…NSASLRFVPK (124 aa)). The active-site Nucleophile is C118.

The protein belongs to the MsrB Met sulfoxide reductase family.

It catalyses the reaction L-methionyl-[protein] + [thioredoxin]-disulfide + H2O = L-methionyl-(R)-S-oxide-[protein] + [thioredoxin]-dithiol. The protein is Peptide methionine sulfoxide reductase MsrB of Brucella melitensis biotype 1 (strain ATCC 23456 / CCUG 17765 / NCTC 10094 / 16M).